Reading from the N-terminus, the 291-residue chain is Phosphatidylglycerol--prolipoprotein diacylglyceryl transferase (291 aa).

The next 7 helical transmembrane spans lie at 21–41, 60–80, 96–116, 130–150, 198–218, 225–245, and 260–280; these read VALHWYGLMYLVGFVFAMWLA, LLYAGFLGVFLGGRIGYVLFY, WDGGMSFHGGLIGVILVMIIF, FIAPLIPFGLGAGRLGNFING, SQLYELALEGVVLFIILNLFI, GAVSGLFLIGYGAFRIIVEFF, and ISMGQILSIPMIIAGAIMMVW. Arg143 lines the a 1,2-diacyl-sn-glycero-3-phospho-(1'-sn-glycerol) pocket.

The protein belongs to the Lgt family.

The protein resides in the cell inner membrane. The catalysed reaction is L-cysteinyl-[prolipoprotein] + a 1,2-diacyl-sn-glycero-3-phospho-(1'-sn-glycerol) = an S-1,2-diacyl-sn-glyceryl-L-cysteinyl-[prolipoprotein] + sn-glycerol 1-phosphate + H(+). It participates in protein modification; lipoprotein biosynthesis (diacylglyceryl transfer). Functionally, catalyzes the transfer of the diacylglyceryl group from phosphatidylglycerol to the sulfhydryl group of the N-terminal cysteine of a prolipoprotein, the first step in the formation of mature lipoproteins. The sequence is that of Phosphatidylglycerol--prolipoprotein diacylglyceryl transferase from Salmonella agona (strain SL483).